An 819-amino-acid polypeptide reads, in one-letter code: MKEYKPQEIESKWQGVWSEKKVFETPQYSDKKKYYALVMFPYPSGTLHVGHVKNYVIGDIVARYKRMQGYNVLHPFGYDAFGLPAENAAIAHKIHPKKWTLDNINVIRGQIKKIGISYDWNREVITCTEDYYKWTQWVFLKLYEAGLAYKKPGAVNWCPSCQTVLANEQVKDGKCERCGTTVTMKYLEQWYFKITDYAEKLLEGLDRLPGWPEHVKTMQRNWIGKSTGAEVDFPVDGMDRKIRIFTTRPDTIYGVTFMAIAPESPLVMELVTEDKKKEVEEFLAKVALEDRFKRTSVEAKKEGVFLGRYAINPLTNEKIPIYVANYILYEYGTGAIMAVPAHDQRDYDFAKTYNLPIKQVIKPKDGEWNINERPYEEEGIMINSGPFDGLESSKGIEEVTKYIEEKGFGKKSVQYKLRDWLISRQRYWGAPIPIVYCEKCGIVPVPEKDLPVRLPENVEFLPTGQSPLTLSEEFKHTTCPKCGGPAHREVETMDTFVDSSWYFLRYVNPKLDDKPFESDDVNYWLPVDQYIGGVEHAVLHLLYSRFITKVLHDLGYLKFDEPFENLFTQGMIYKDGWKMSKSKGNVVSPDDMINKYGADTLRMYILFMAPPEKDAEWNDAGIDGVNRFIKRLWNNYYKILDIINSNDTKNENEFGKEEKNLRRKLHAMIKKIKEDIEGGFKFNTAIAGLMEFNNQLSDYLENTKSPNKKLLREIAEKVVLILSPFAPHMAEEMWHDLGKETLIVEEKWPEYDPEALKEDELTIVVQVNGKVRGKITVPADASEEEIKNRAVENAGKFLEGKTIVNTIYVKGKLVNIVIK.

A 'HIGH' region motif is present at residues 41–51 (PYPSGTLHVGH). The 'KMSKS' region signature appears at 578–582 (KMSKS). Lys581 contributes to the ATP binding site.

The protein belongs to the class-I aminoacyl-tRNA synthetase family.

The protein localises to the cytoplasm. The catalysed reaction is tRNA(Leu) + L-leucine + ATP = L-leucyl-tRNA(Leu) + AMP + diphosphate. The polypeptide is Leucine--tRNA ligase (Fervidobacterium nodosum (strain ATCC 35602 / DSM 5306 / Rt17-B1)).